The following is a 330-amino-acid chain: Ketol-acid reductoisomerase (NADP(+)) (330 aa).

Positions 1-181 (MKMYYESDVN…GFTKAGVIET (181 aa)) constitute a KARI N-terminal Rossmann domain. NADP(+) contacts are provided by residues 24–27 (YGSQ), Arg-47, Ser-52, and 82–85 (DEIQ). The active site involves His-107. Gly-133 is an NADP(+) binding site. A KARI C-terminal knotted domain is found at 182–327 (TFKEETETDL…ERLRKACGLQ (146 aa)). Residues Asp-190, Glu-194, Glu-226, and Glu-230 each contribute to the Mg(2+) site. Ser-251 serves as a coordination point for substrate.

Belongs to the ketol-acid reductoisomerase family. Requires Mg(2+) as cofactor.

The catalysed reaction is (2R)-2,3-dihydroxy-3-methylbutanoate + NADP(+) = (2S)-2-acetolactate + NADPH + H(+). The enzyme catalyses (2R,3R)-2,3-dihydroxy-3-methylpentanoate + NADP(+) = (S)-2-ethyl-2-hydroxy-3-oxobutanoate + NADPH + H(+). It functions in the pathway amino-acid biosynthesis; L-isoleucine biosynthesis; L-isoleucine from 2-oxobutanoate: step 2/4. Its pathway is amino-acid biosynthesis; L-valine biosynthesis; L-valine from pyruvate: step 2/4. In terms of biological role, involved in the biosynthesis of branched-chain amino acids (BCAA). Catalyzes an alkyl-migration followed by a ketol-acid reduction of (S)-2-acetolactate (S2AL) to yield (R)-2,3-dihydroxy-isovalerate. In the isomerase reaction, S2AL is rearranged via a Mg-dependent methyl migration to produce 3-hydroxy-3-methyl-2-ketobutyrate (HMKB). In the reductase reaction, this 2-ketoacid undergoes a metal-dependent reduction by NADPH to yield (R)-2,3-dihydroxy-isovalerate. The polypeptide is Ketol-acid reductoisomerase (NADP(+)) (Methanobrevibacter smithii (strain ATCC 35061 / DSM 861 / OCM 144 / PS)).